The sequence spans 210 residues: Probable high-affinity nitrate transporter-activating protein 2.2 (210 aa).

The first 23 residues, 1-23 (MARFGAVIHRVFLPLLLLLVVLG), serve as a signal peptide directing secretion. Residues 182 to 202 (IEVAAGVLSAFSVAALAVFLV) form a helical membrane-spanning segment.

The protein belongs to the NAR2 family.

It is found in the cell membrane. In terms of biological role, involved in nitrate transport. The protein is Probable high-affinity nitrate transporter-activating protein 2.2 (NAR2.2) of Oryza sativa subsp. japonica (Rice).